The chain runs to 210 residues: Mating-type-like protein A1 (210 aa).

The homeobox DNA-binding region spans 141–200 (SKKKRQRLDNSTKEFLEKVFEKNKQPNRRERELIAEKHGVSLSQIRVWFTNKRMRKKEPK).

It belongs to the MATA1 family. In terms of assembly, forms a heterodimer with ALPHA2.

Its subcellular location is the nucleus. In terms of biological role, mating type proteins are sequence specific DNA-binding proteins that act as master switches in yeast differentiation by controlling gene expression in a cell type-specific fashion. Transcriptional corepressor that acts in conjunction with ALPHA2 to repress transcription both of homozygote-specific genes and of genes necessary for the white-opaque switch, a prerequisite for mating. This is Mating-type-like protein A1 (MTLA1) from Candida albicans (strain SC5314 / ATCC MYA-2876) (Yeast).